The following is a 228-amino-acid chain: Cytochrome P450 monooxygenase ataY (228 aa).

Residue Cys-216 participates in heme binding.

Belongs to the cytochrome P450 family. Heme is required as a cofactor.

It participates in mycotoxin biosynthesis. In terms of biological role, cytochrome P450 monooxygenase; part of the gene cluster that mediates the biosynthesis of acetylaranotin, a member of the epipolythiodioxopiperazine (ETP) class of toxins characterized by a disulfide-bridged cyclic dipeptide. The first step of acetylaranotin biosynthesis is performed by the NRPS ataP which produces diketopiperazine cyclo-L-Phe-L-Phe via the condensation of 2 phenylalanines (L-Phe). The ataC domain of ataTC then catalyzes the formation of bishydroxylation of cyclo-L-Phe-L-Phe. The glutathione S-transferase domain ataG in ataIMG further catalyzes the conjugation of two glutathiones to the bishydroxylated intermediate. Next, the dipeptidase ataJ removes the Glu residues. The following step is performed by the carbon sulfur lyase domain ataI of ataIMG which may convert the bis-cysteinyl adduct to yield an epidithiol intermediate. The ataT domain from ataTC then catalyzes the oxidation of the free dithiols, followed by a cyclization step catalyzed by the cytochrome P450 ataF. AtaF probably acts as an epoxidase to promote a dual epoxidation formation at C8 and C9 along with C8' and C9', followed by the spontaneous nucleophilic attack of the amide nitrogens N10 and N10' to yield an intermediate with the pyrrolidine partial structure. The final steps of acetylaranotin biosynthesis involve the acetylation and ring rearrangement of an epitetrathiodiketopiperazine intermediate to produce acetylaranotin. AtaH probably catalyzes the acetylation of epitetrathiodiketopiperazine to produce a diacetate and ataY is responsible for the formation of the dihydrooxepin moiety that converts the diacetate intermediate to acetylaranotin via acetylapoaranotin. Both enzymes could function independently in the absence of the other. The acetylaranotin bis-thiomethyltransferase ataS located outside of acetylaranotin gene cluster is the main thiomethyltransferase responsible for converting acetylaranotin and its related intermediates to their methylated forms. This chain is Cytochrome P450 monooxygenase ataY, found in Aspergillus terreus (strain NIH 2624 / FGSC A1156).